We begin with the raw amino-acid sequence, 156 residues long: 6,7-dimethyl-8-ribityllumazine synthase (156 aa).

Residues F22, 56-58 (AFE), and 80-82 (AVI) contribute to the 5-amino-6-(D-ribitylamino)uracil site. 85–86 (ST) serves as a coordination point for (2S)-2-hydroxy-3-oxobutyl phosphate. H88 (proton donor) is an active-site residue. F113 lines the 5-amino-6-(D-ribitylamino)uracil pocket. R127 is a (2S)-2-hydroxy-3-oxobutyl phosphate binding site.

This sequence belongs to the DMRL synthase family.

It carries out the reaction (2S)-2-hydroxy-3-oxobutyl phosphate + 5-amino-6-(D-ribitylamino)uracil = 6,7-dimethyl-8-(1-D-ribityl)lumazine + phosphate + 2 H2O + H(+). It functions in the pathway cofactor biosynthesis; riboflavin biosynthesis; riboflavin from 2-hydroxy-3-oxobutyl phosphate and 5-amino-6-(D-ribitylamino)uracil: step 1/2. In terms of biological role, catalyzes the formation of 6,7-dimethyl-8-ribityllumazine by condensation of 5-amino-6-(D-ribitylamino)uracil with 3,4-dihydroxy-2-butanone 4-phosphate. This is the penultimate step in the biosynthesis of riboflavin. The polypeptide is 6,7-dimethyl-8-ribityllumazine synthase (Caldicellulosiruptor saccharolyticus (strain ATCC 43494 / DSM 8903 / Tp8T 6331)).